The following is a 461-amino-acid chain: Kynureninase (461 aa).

Pyridoxal 5'-phosphate contacts are provided by residues L114, T115, 142–145 (FPSD), D228, H231, and Y253. K254 carries the N6-(pyridoxal phosphate)lysine modification. Pyridoxal 5'-phosphate is bound by residues W288 and N316.

It belongs to the kynureninase family. As to quaternary structure, homodimer. Requires pyridoxal 5'-phosphate as cofactor.

The protein resides in the cytoplasm. It catalyses the reaction L-kynurenine + H2O = anthranilate + L-alanine + H(+). It carries out the reaction 3-hydroxy-L-kynurenine + H2O = 3-hydroxyanthranilate + L-alanine + H(+). It participates in amino-acid degradation; L-kynurenine degradation; L-alanine and anthranilate from L-kynurenine: step 1/1. Its pathway is cofactor biosynthesis; NAD(+) biosynthesis; quinolinate from L-kynurenine: step 2/3. Functionally, catalyzes the cleavage of L-kynurenine (L-Kyn) and L-3-hydroxykynurenine (L-3OHKyn) into anthranilic acid (AA) and 3-hydroxyanthranilic acid (3-OHAA), respectively. This is Kynureninase from Lodderomyces elongisporus (strain ATCC 11503 / CBS 2605 / JCM 1781 / NBRC 1676 / NRRL YB-4239) (Yeast).